The following is a 617-amino-acid chain: Electron transfer flavoprotein-ubiquinone oxidoreductase, mitochondrial (617 aa).

The N-terminal 33 residues, 1–33 (MLVPLAKLSCLAYQCFHALKIKKNYLPLCATRW), are a transit peptide targeting the mitochondrion. 71 to 85 (VVIVGAGPAGLSAAV) serves as a coordination point for FAD. Lys-96 is subject to N6-acetyllysine. Residues 109-130 (IGAHTLSGACLDPGAFKELFPD) lie within the membrane without spanning it. 2 positions are modified to N6-acetyllysine: Lys-132 and Lys-223. Residues Gly-305 and Gly-306 each contribute to the a ubiquinone site. An N6-acetyllysine modification is found at Lys-357. Residues 428–447 (IGLHVTEYEDNLKNSWVWKE) lie within the membrane without spanning it. Ser-551 bears the Phosphoserine mark. 4 residues coordinate [4Fe-4S] cluster: Cys-561, Cys-586, Cys-589, and Cys-592. Positions 577–606 (FRLQINAQNCVHCKTCDIKDPSQNINWVVP) constitute a 4Fe-4S ferredoxin-type domain.

This sequence belongs to the ETF-QO/FixC family. As to quaternary structure, monomer. [4Fe-4S] cluster is required as a cofactor. The cofactor is FAD.

It is found in the mitochondrion inner membrane. It carries out the reaction a ubiquinone + reduced [electron-transfer flavoprotein] = a ubiquinol + oxidized [electron-transfer flavoprotein] + H(+). Its function is as follows. Accepts electrons from ETF and reduces ubiquinone. The sequence is that of Electron transfer flavoprotein-ubiquinone oxidoreductase, mitochondrial from Homo sapiens (Human).